The primary structure comprises 178 residues: Alkyl hydroperoxide reductase AhpD (178 aa).

Residue C130 is the Proton donor of the active site. An intrachain disulfide couples C130 to C133. The active-site Cysteine sulfenic acid (-SOH) intermediate is the C133.

Belongs to the AhpD family. Homotrimer.

It catalyses the reaction N(6)-[(R)-dihydrolipoyl]-L-lysyl-[lipoyl-carrier protein] + a hydroperoxide = N(6)-[(R)-lipoyl]-L-lysyl-[lipoyl-carrier protein] + an alcohol + H2O. Its function is as follows. Antioxidant protein with alkyl hydroperoxidase activity. Required for the reduction of the AhpC active site cysteine residues and for the regeneration of the AhpC enzyme activity. This Mycobacterium ulcerans (strain Agy99) protein is Alkyl hydroperoxide reductase AhpD.